The primary structure comprises 70 residues: Venom antimicrobial peptide-6 (70 aa).

Positions 1–23 (MKSQTFFLLFLVVFLLAITQSEA) are cleaved as a signal peptide. Phe-36 is subject to Phenylalanine amide. The propeptide occupies 40–70 (SLRDMDTMKYLYDPSLSAADLKTLQKLMENY).

Belongs to the non-disulfide-bridged peptide (NDBP) superfamily. Short antimicrobial peptide (group 4) family. As to expression, expressed by the venom gland.

It localises to the secreted. It is found in the target cell membrane. In terms of biological role, amphipathic peptide that exhibits extensive cytolytic activities against both prokaryotic and eukaryotic cells. Is more potent against Gram-positive bacteria (lethal concentration (LC)=0.25-2.9 uM) than against Gram-negative bacteria (LC=6.2-&gt;50 uM), and fungi ((LC)=14.1-&gt;50 uM). Shows hemolytic activity against rabbit erythrocytes (37.7% of inhibition at 6.25 uM) and cytolysis against rat dorsal root ganglions. In vivo, intravenous injection into mice tail provokes uncomfortable symptoms with a death rate of 12.5%. This Mesobuthus eupeus (Lesser Asian scorpion) protein is Venom antimicrobial peptide-6.